Reading from the N-terminus, the 34-residue chain is uncharacterized protein (34 aa).

Residues 1–34 (MRLRRLFKQPSTRVLGVTNCPRQQGHQKRREQPD) form a disordered region. The segment covering 25 to 34 (GHQKRREQPD) has biased composition (basic residues).

This is an uncharacterized protein from Schizosaccharomyces pombe (strain 972 / ATCC 24843) (Fission yeast).